The primary structure comprises 76 residues: Serine proteinase inhibitor IA-1 (76 aa).

Ser-1 carries the N-acetylserine modification.

The protein belongs to the protease inhibitor I9 family.

Specifically inhibits an endogenous intracellular serine proteinase (proteinase A). The sequence is that of Serine proteinase inhibitor IA-1 from Pleurotus ostreatus (Oyster mushroom).